Consider the following 321-residue polypeptide: Sideroflexin-3 (321 aa).

Residue M1 is modified to N-acetylmethionine. 4 helical membrane passes run L146–L164, L174–L194, F226–I246, and L266–F286.

The protein belongs to the sideroflexin family.

Its subcellular location is the mitochondrion membrane. It catalyses the reaction L-serine(in) = L-serine(out). Functionally, mitochondrial serine transporter that mediates transport of serine into mitochondria, an important step of the one-carbon metabolism pathway. Mitochondrial serine is converted to glycine and formate, which then exits to the cytosol where it is used to generate the charged folates that serve as one-carbon donors. The sequence is that of Sideroflexin-3 (SFXN3) from Bos taurus (Bovine).